The sequence spans 140 residues: Phospholipase A2 (140 aa).

Residues methionine 1–serine 21 form the signal peptide. Positions isoleucine 22–leucine 27 are excised as a propeptide. Cystine bridges form between cysteine 38/cysteine 97, cysteine 52/cysteine 139, cysteine 54/cysteine 70, cysteine 69/cysteine 125, cysteine 76/cysteine 118, cysteine 86/cysteine 111, and cysteine 104/cysteine 116. Residue asparagine 39 is glycosylated (N-linked (GlcNAc...) asparagine). Tyrosine 53, glycine 55, and glycine 57 together coordinate Ca(2+). Residue histidine 73 is part of the active site. Aspartate 74 serves as a coordination point for Ca(2+). The N-linked (GlcNAc...) asparagine glycan is linked to asparagine 107. Residue aspartate 119 is part of the active site.

It belongs to the phospholipase A2 family. Group I subfamily. D49 sub-subfamily. The cofactor is Ca(2+). In terms of tissue distribution, expressed by the venom gland.

It localises to the secreted. It catalyses the reaction a 1,2-diacyl-sn-glycero-3-phosphocholine + H2O = a 1-acyl-sn-glycero-3-phosphocholine + a fatty acid + H(+). Functionally, PLA2 catalyzes the calcium-dependent hydrolysis of the 2-acyl groups in 3-sn-phosphoglycerides. This chain is Phospholipase A2, found in Micrurus altirostris (Uruguayan coral snake).